Consider the following 325-residue polypeptide: UPF0285 protein MMP0642 (325 aa).

This sequence belongs to the UPF0285 family.

The chain is UPF0285 protein MMP0642 from Methanococcus maripaludis (strain DSM 14266 / JCM 13030 / NBRC 101832 / S2 / LL).